A 194-amino-acid polypeptide reads, in one-letter code: Glycerol-3-phosphate acyltransferase (194 aa).

Transmembrane regions (helical) follow at residues 3-23 (IALLLLIAYLLGAIPTGLIVG), 47-67 (VLGKKAGIFVTIFDVAKGVLP), 78-97 (IHGIWFGLAAIIGHVYPIYL), 112-132 (ILGVNPVVFLIIAVIFFTLLF), and 153-173 (LFFDDIILQIISFLIMLLIII).

It belongs to the PlsY family. As to quaternary structure, probably interacts with PlsX.

It localises to the cell membrane. It catalyses the reaction an acyl phosphate + sn-glycerol 3-phosphate = a 1-acyl-sn-glycero-3-phosphate + phosphate. Its pathway is lipid metabolism; phospholipid metabolism. Catalyzes the transfer of an acyl group from acyl-phosphate (acyl-PO(4)) to glycerol-3-phosphate (G3P) to form lysophosphatidic acid (LPA). This enzyme utilizes acyl-phosphate as fatty acyl donor, but not acyl-CoA or acyl-ACP. The sequence is that of Glycerol-3-phosphate acyltransferase from Macrococcus caseolyticus (strain JCSC5402) (Macrococcoides caseolyticum).